Here is a 514-residue protein sequence, read N- to C-terminus: Flagellin B (514 aa).

Belongs to the bacterial flagellin family. As to quaternary structure, heteromer of FlaA and FlaB. FlaB is located proximal to the hook while the remainder of the filament is composed of the predominant FlaA.

Its subcellular location is the secreted. The protein resides in the bacterial flagellum. Functionally, flagellin is the subunit protein which polymerizes to form the filaments of bacterial flagella. Important for motility and virulence. In Helicobacter pylori (strain ATCC 700392 / 26695) (Campylobacter pylori), this protein is Flagellin B (flaB).